We begin with the raw amino-acid sequence, 739 residues long: Vascular cell adhesion protein 1 (739 aa).

The N-terminal stretch at 1–24 (MPVKMVAIFGASTVLWILFAVSQA) is a signal peptide. 7 Ig-like C2-type domains span residues 25–111 (FKIE…IQVD), 119–212 (PEIQ…KERE), 223–309 (PKNT…LIVQ), 312–397 (PFTV…KTIQ), 408–506 (EIEI…QTLY), 514–595 (PTIW…VELI), and 601–682 (KDIQ…RSLT). Over 25-698 (FKIEISPEYK…ENNKDYFSPE (674 aa)) the chain is Extracellular. 5 cysteine pairs are disulfide-bonded: Cys47–Cys95, Cys52–Cys99, Cys137–Cys195, Cys246–Cys291, and Cys335–Cys383. The N-linked (GlcNAc...) asparagine glycan is linked to Asn273. Asn424, Asn531, Asn561, and Asn650 each carry an N-linked (GlcNAc...) asparagine glycan. A disulfide bridge connects residues Cys534 and Cys579. A helical membrane pass occupies residues 699–720 (LLALYFASSLVIPAIGMIIYFA). Residues 721–739 (RKANMKGSYSLVEAQKSKV) are Cytoplasmic-facing.

Binds to ECMV-D capsid proteins and acts as a receptor for this virus. Post-translationally, cleaved by the metalloproteinase ADAM17 to generate the soluble form. Sialoglycoprotein. In terms of processing, ubiquitinated by TRIM65 via 'Lys-48'-linked ubiquitination; leading to proteasomal degradation. In terms of tissue distribution, expressed in aortic endothelial cells, with low expression in the descending thoracic aorta and the outer curvature of the aortic arch, where pulsatory shear stress exists, and high in the inner curvature of the aortic arch, where oscillatory shear stress prevails (at protein level). Expressed on inflamed vascular endothelium, as well as on macrophage-like and dendritic cell types in both normal and inflamed tissue.

Its subcellular location is the cell membrane. The protein localises to the secreted. In terms of biological role, cell adhesion glycoprotein predominantly expressed on the surface of endothelial cells that plays an important role in immune surveillance and inflammation. Acts as a major regulator of leukocyte adhesion to the endothelium through interaction with different types of integrins. During inflammatory responses, binds ligands on the surface of activated endothelial cells to initiate the activation of calcium channels and the plasma membrane-associated small GTPase RAC1 leading to leukocyte transendothelial migration. Also serves as a quality-control checkpoint for entry into bone marrow by providing a 'don't-eat-me' stamping in the context of major histocompatibility complex (MHC) class-I presentation. This is Vascular cell adhesion protein 1 (Vcam1) from Rattus norvegicus (Rat).